A 398-amino-acid polypeptide reads, in one-letter code: Acetate kinase (398 aa).

N8 serves as a coordination point for Mg(2+). K15 is a binding site for ATP. Residue R89 participates in substrate binding. D146 functions as the Proton donor/acceptor in the catalytic mechanism. ATP-binding positions include 206–210 (HIGNG), 283–285 (DMR), and 331–335 (GMGEN). Residue E383 coordinates Mg(2+).

This sequence belongs to the acetokinase family. In terms of assembly, homodimer. Mg(2+) serves as cofactor. The cofactor is Mn(2+).

The protein resides in the cytoplasm. The enzyme catalyses acetate + ATP = acetyl phosphate + ADP. It participates in metabolic intermediate biosynthesis; acetyl-CoA biosynthesis; acetyl-CoA from acetate: step 1/2. In terms of biological role, catalyzes the formation of acetyl phosphate from acetate and ATP. Can also catalyze the reverse reaction. This chain is Acetate kinase, found in Streptococcus pyogenes serotype M6 (strain ATCC BAA-946 / MGAS10394).